The following is a 430-amino-acid chain: Trigger factor (430 aa).

The region spanning 163–248 is the PPIase FKBP-type domain; that stretch reads GNIAIIDFKG…IKDIKVKELP (86 aa).

It belongs to the FKBP-type PPIase family. Tig subfamily.

Its subcellular location is the cytoplasm. The catalysed reaction is [protein]-peptidylproline (omega=180) = [protein]-peptidylproline (omega=0). Its function is as follows. Involved in protein export. Acts as a chaperone by maintaining the newly synthesized protein in an open conformation. Functions as a peptidyl-prolyl cis-trans isomerase. This is Trigger factor from Clostridium botulinum (strain Langeland / NCTC 10281 / Type F).